The primary structure comprises 583 residues: Pentatricopeptide repeat-containing protein At2g33760 (583 aa).

9 PPR repeats span residues 71-105 (DDFL…NVSP), 106-140 (SNYT…GFGL), 141-171 (DTYV…MPEK), 172-206 (SIVA…GFEP), 207-241 (DSAT…GLDL), 242-276 (NVKL…NVAA), 277-303 (WTAM…MEDD), 309-339 (NNVT…MTKS), and 345-379 (GVEH…GKAT). The type E motif stretch occupies residues 383 to 458 (LWTAMLGACK…QVGYSVIEVE (76 aa)). Residues 459 to 489 (NKTYMFSMGDESHQETGEIYRYLETLISRCK) form a type E(+) motif region. Positions 490-583 (EIGYAPVSEE…NGSCSCLDYW (94 aa)) are type DYW motif.

Belongs to the PPR family. PCMP-H subfamily.

The chain is Pentatricopeptide repeat-containing protein At2g33760 (PCMP-H6) from Arabidopsis thaliana (Mouse-ear cress).